A 269-amino-acid chain; its full sequence is uncharacterized protein (269 aa).

This is an uncharacterized protein from Schizosaccharomyces pombe (strain 972 / ATCC 24843) (Fission yeast).